Consider the following 165-residue polypeptide: Probable velvet family sexual development regulator CC1G_12219 (165 aa).

One can recognise a Velvet domain in the interval 1–121 (MSNTDAQTSF…SVWGAQVNVR (121 aa)).

The protein belongs to the velvet family.

Its subcellular location is the nucleus. Velvet-domain-containing protein that probably acts as a positive regulator of sexual development. The sequence is that of Probable velvet family sexual development regulator CC1G_12219 from Coprinopsis cinerea (strain Okayama-7 / 130 / ATCC MYA-4618 / FGSC 9003) (Inky cap fungus).